The sequence spans 215 residues: MVAGSPKTSKKTLPDLSYEDRIEGVVFGVDEVGRGPLAGPVMAGAVYLHREHIPEGINDSKKLTARRRHLLSDMLHNQADYATGMADVHEIDRINIRQASLLAMKRAVEALIQKIGREPDCILVDGRDIPDWPWPSLPIIKGDSLSLSIAAASIVAKVERDEIMVKASQEYPGYGWEHNMGYPTKEHREAIQRLKPTKFHRRSFSPIRQFYENVD.

The RNase H type-2 domain occupies 24–215; sequence GVVFGVDEVG…PIRQFYENVD (192 aa). 3 residues coordinate a divalent metal cation: Asp-30, Glu-31, and Asp-125.

The protein belongs to the RNase HII family. Mn(2+) serves as cofactor. The cofactor is Mg(2+).

The protein resides in the cytoplasm. The catalysed reaction is Endonucleolytic cleavage to 5'-phosphomonoester.. In terms of biological role, endonuclease that specifically degrades the RNA of RNA-DNA hybrids. The sequence is that of Ribonuclease HII from Zymomonas mobilis subsp. mobilis (strain ATCC 31821 / ZM4 / CP4).